The chain runs to 194 residues: Probable proteasome subunit beta type-4 (194 aa).

Belongs to the peptidase T1B family. In terms of assembly, the 26S proteasome consists of a 20S proteasome core and two 19S regulatory subunits. The 20S proteasome core is composed of 28 subunits that are arranged in four stacked rings, resulting in a barrel-shaped structure. The two end rings are each formed by seven alpha subunits, and the two central rings are each formed by seven beta subunits. The catalytic chamber with the active sites is on the inside of the barrel.

The protein localises to the cytoplasm. It localises to the nucleus. Its function is as follows. Non-catalytic component of the proteasome, a multicatalytic proteinase complex which is characterized by its ability to cleave peptides with Arg, Phe, Tyr, Leu, and Glu adjacent to the leaving group at neutral or slightly basic pH. The proteasome has an ATP-dependent proteolytic activity. The polypeptide is Probable proteasome subunit beta type-4 (PRO2) (Meyerozyma guilliermondii (strain ATCC 6260 / CBS 566 / DSM 6381 / JCM 1539 / NBRC 10279 / NRRL Y-324) (Yeast)).